Consider the following 459-residue polypeptide: Inositol-trisphosphate 3-kinase A (459 aa).

The interval 1–29 (MTLPGRPTGMARPRGAGPCSPGLERAPRR) is disordered. Residues arginine 35, arginine 55, and arginine 62 each carry the omega-N-methylarginine modification. The disordered stretch occupies residues 49–164 (AAAGEPRARG…TSEDVGQKSH (116 aa)). Residues 116 to 132 (RRLSTSSLSSTGSSSLL) are compositionally biased toward low complexity. A phosphoserine mark is found at serine 135 and serine 195. Residues serine 195, lysine 207, 247–249 (QDL), and aspartate 260 contribute to the ATP site. Residues lysine 262 and arginine 283 each coordinate substrate. The segment at 285–293 (DMYKKMLAV) is calmodulin-binding. Residue 310-317 (KPRYMQWR) participates in substrate binding. Residues lysine 334 and aspartate 414 each coordinate ATP. Lysine 417 is a substrate binding site.

It belongs to the inositol phosphokinase (IPK) family.

Its subcellular location is the cytoplasm. It localises to the cytoskeleton. It carries out the reaction 1D-myo-inositol 1,4,5-trisphosphate + ATP = 1D-myo-inositol 1,3,4,5-tetrakisphosphate + ADP + H(+). With respect to regulation, activated by calcium/calmodulin. Functionally, catalyzes the phosphorylation of 1D-myo-inositol 1,4,5-trisphosphate (InsP3) into 1D-myo-inositol 1,3,4,5-tetrakisphosphate and participates to the regulation of calcium homeostasis. This is Inositol-trisphosphate 3-kinase A from Mus musculus (Mouse).